The following is a 1006-amino-acid chain: Kinesin-like protein KIN-5C (1006 aa).

Positions 9–355 (NVQVLLRCRP…LDYAHRAKNI (347 aa)) constitute a Kinesin motor domain. 95–102 (GQTGTGKT) contacts ATP. The stretch at 371–522 (IKDLYGEIER…NASLFQKIAR (152 aa)) forms a coiled coil.

Belongs to the TRAFAC class myosin-kinesin ATPase superfamily. Kinesin family. KIN-5/BimC subfamily.

Its subcellular location is the cytoplasm. The protein localises to the cytoskeleton. It is found in the spindle. Its function is as follows. Responsible for microtubule translocation. May be important for the organization of phragmoplast-specific arrays of microtubules. Plays an essential role in stabilizing the mitotic spindle. Required during mitotic cytokinesis. The polypeptide is Kinesin-like protein KIN-5C (Nicotiana tabacum (Common tobacco)).